We begin with the raw amino-acid sequence, 340 residues long: Agmatinase, mitochondrial (340 aa).

Mn(2+)-binding residues include histidine 150, aspartate 173, histidine 175, aspartate 177, aspartate 264, and aspartate 266.

The protein belongs to the arginase family. Agmatinase subfamily. Requires Mn(2+) as cofactor.

The protein resides in the mitochondrion. The enzyme catalyses agmatine + H2O = urea + putrescine. It participates in amine and polyamine biosynthesis; putrescine biosynthesis via agmatine pathway; putrescine from agmatine: step 1/1. The chain is Agmatinase, mitochondrial (AGMAT) from Gallus gallus (Chicken).